The sequence spans 175 residues: uncharacterized protein (175 aa).

The span at 35–56 (LIENSNYDNNNINNNNNNNNTD) shows a compositional bias: low complexity. Positions 35–70 (LIENSNYDNNNINNNNNNNNTDNDNDNNNDNEPFYN) are disordered. 2 helical membrane passes run 106 to 126 (ILSFSIKSFLLLILYILFFNY) and 132 to 152 (YFIILLSLNLIITLISIKSIF).

It localises to the membrane. This is an uncharacterized protein from Dictyostelium discoideum (Social amoeba).